The following is a 238-amino-acid chain: Deoxyribose-phosphate aldolase (238 aa).

Residue D102 is the Proton donor/acceptor of the active site. K164 (schiff-base intermediate with acetaldehyde) is an active-site residue. K193 serves as the catalytic Proton donor/acceptor.

It belongs to the DeoC/FbaB aldolase family. DeoC type 1 subfamily.

It localises to the cytoplasm. The enzyme catalyses 2-deoxy-D-ribose 5-phosphate = D-glyceraldehyde 3-phosphate + acetaldehyde. It functions in the pathway carbohydrate degradation; 2-deoxy-D-ribose 1-phosphate degradation; D-glyceraldehyde 3-phosphate and acetaldehyde from 2-deoxy-alpha-D-ribose 1-phosphate: step 2/2. Catalyzes a reversible aldol reaction between acetaldehyde and D-glyceraldehyde 3-phosphate to generate 2-deoxy-D-ribose 5-phosphate. The protein is Deoxyribose-phosphate aldolase of Rhodospirillum rubrum (strain ATCC 11170 / ATH 1.1.1 / DSM 467 / LMG 4362 / NCIMB 8255 / S1).